Reading from the N-terminus, the 495-residue chain is Muscle LIM protein Mlp84B (495 aa).

Residues 12 to 63 (CPRCGKSVYAAEERLAGGYVFHKNCFKCGMCNKSLDSTNCTEHERELYCKTC) enclose the LIM zinc-binding 1 domain. The Nuclear localization signal signature appears at 66-71 (RKFGPK). An LIM zinc-binding 2 domain is found at 120–172 (CPRCGGYVYAAEQMLARGRSWHKECFKCGTCKKGLDSILCCEAPDKNIYCKGC). The short motif at 175–180 (KKFGPK) is the Nuclear localization signal element. LIM zinc-binding domains are found at residues 222–274 (CPRC…CRTC), 325–377 (CPRC…CRAC), and 421–473 (CPRC…CRAC).

In terms of tissue distribution, in the embryo, expression is restricted to the somatic, visceral, and pharyngeal muscles. Within the somatic musculature, expression is localized at the ends of muscles fibers at the point of attachment to the epidermis (at protein level). There is no expression in cardiac mesoderm or in fat body.

It localises to the cytoplasm. It is found in the nucleus. Its function is as follows. Plays a role in cell differentiation late in myogenesis. Transcription factor Mef2 is essential for expression. The chain is Muscle LIM protein Mlp84B from Drosophila melanogaster (Fruit fly).